The primary structure comprises 348 residues: tRNA N6-adenosine threonylcarbamoyltransferase (348 aa).

Residues His111 and His115 each contribute to the Fe cation site. Substrate is bound by residues 134–138 (LVSGG), Asp167, Gly180, and Asn276. Asp304 serves as a coordination point for Fe cation.

This sequence belongs to the KAE1 / TsaD family. Fe(2+) serves as cofactor.

It is found in the cytoplasm. The catalysed reaction is L-threonylcarbamoyladenylate + adenosine(37) in tRNA = N(6)-L-threonylcarbamoyladenosine(37) in tRNA + AMP + H(+). Its function is as follows. Required for the formation of a threonylcarbamoyl group on adenosine at position 37 (t(6)A37) in tRNAs that read codons beginning with adenine. Is involved in the transfer of the threonylcarbamoyl moiety of threonylcarbamoyl-AMP (TC-AMP) to the N6 group of A37, together with TsaE and TsaB. TsaD likely plays a direct catalytic role in this reaction. The polypeptide is tRNA N6-adenosine threonylcarbamoyltransferase (Bordetella petrii (strain ATCC BAA-461 / DSM 12804 / CCUG 43448)).